A 488-amino-acid polypeptide reads, in one-letter code: Bifunctional protein NifU/MnmA (488 aa).

A nifU-like protein region spans residues 1-130 (MPERYGPRVI…DYWSRQGDAL (130 aa)). The tRNA-specific 2-thiouridylase MnmA stretch occupies residues 143 to 488 (RRGVVAAMSG…GGGIIARRDA (346 aa)). ATP contacts are provided by residues 149 to 156 (AMSGGVDS) and phenylalanine 175. Cysteine 240 acts as the Nucleophile in catalysis. Cysteine 240 and cysteine 333 are oxidised to a cystine. Residue glycine 264 participates in ATP binding. Positions 283–285 (KDQ) are interaction with tRNA. Cysteine 333 (cysteine persulfide intermediate) is an active-site residue. Residues 433-434 (RY) form an interaction with tRNA region.

In the N-terminal section; belongs to the NifU family. The protein in the C-terminal section; belongs to the MnmA/TRMU family.

The protein resides in the cytoplasm. The enzyme catalyses S-sulfanyl-L-cysteinyl-[protein] + uridine(34) in tRNA + AH2 + ATP = 2-thiouridine(34) in tRNA + L-cysteinyl-[protein] + A + AMP + diphosphate + H(+). May be involved in the formation or repair of [Fe-S] clusters present in iron-sulfur proteins. Functionally, catalyzes the 2-thiolation of uridine at the wobble position (U34) of tRNA, leading to the formation of s(2)U34. The sequence is that of Bifunctional protein NifU/MnmA (nifU/mnmA) from Rubrobacter xylanophilus (strain DSM 9941 / JCM 11954 / NBRC 16129 / PRD-1).